The chain runs to 164 residues: Lipoprotein signal peptidase (164 aa).

4 helical membrane-spanning segments follow: residues 11 to 31 (YWVL…AVLS), 41 to 61 (VIPS…FSFL), 64 to 84 (QGGW…AYLV), and 92 to 112 (FATL…GNVI). Catalysis depends on residues Asp122 and Asp140. Residues 132 to 152 (FYPAFNIADSFICVGAVLAVL) form a helical membrane-spanning segment.

This sequence belongs to the peptidase A8 family.

It localises to the cell inner membrane. It catalyses the reaction Release of signal peptides from bacterial membrane prolipoproteins. Hydrolyzes -Xaa-Yaa-Zaa-|-(S,diacylglyceryl)Cys-, in which Xaa is hydrophobic (preferably Leu), and Yaa (Ala or Ser) and Zaa (Gly or Ala) have small, neutral side chains.. It functions in the pathway protein modification; lipoprotein biosynthesis (signal peptide cleavage). This protein specifically catalyzes the removal of signal peptides from prolipoproteins. The chain is Lipoprotein signal peptidase from Neisseria meningitidis serogroup C (strain 053442).